Here is a 242-residue protein sequence, read N- to C-terminus: Transcriptional activator protein RaiR (242 aa).

In terms of domain architecture, HTH luxR-type spans 177–242 (KVADLPRLSR…EQLLGPRRSN (66 aa)). The H-T-H motif DNA-binding region spans 201–220 (AKQICARLSISVSAVQLYLA).

The protein belongs to the autoinducer-regulated transcriptional regulatory protein family.

In Rhizobium etli, this protein is Transcriptional activator protein RaiR (raiR).